The following is a 486-amino-acid chain: Pup--protein ligase (486 aa).

Position 33 (Glu-33) interacts with Mg(2+). Arg-76 is an ATP binding site. Position 78 (Tyr-78) interacts with Mg(2+). The Proton acceptor role is filled by Asp-80. Glu-86 is a Mg(2+) binding site. Positions 89 and 451 each coordinate ATP.

This sequence belongs to the Pup ligase/Pup deamidase family. Pup-conjugating enzyme subfamily.

The catalysed reaction is ATP + [prokaryotic ubiquitin-like protein]-L-glutamate + [protein]-L-lysine = ADP + phosphate + N(6)-([prokaryotic ubiquitin-like protein]-gamma-L-glutamyl)-[protein]-L-lysine.. It participates in protein degradation; proteasomal Pup-dependent pathway. It functions in the pathway protein modification; protein pupylation. Its function is as follows. Catalyzes the covalent attachment of the prokaryotic ubiquitin-like protein modifier Pup to the proteasomal substrate proteins, thereby targeting them for proteasomal degradation. This tagging system is termed pupylation. The ligation reaction involves the side-chain carboxylate of the C-terminal glutamate of Pup and the side-chain amino group of a substrate lysine. The polypeptide is Pup--protein ligase (Bifidobacterium longum (strain NCC 2705)).